The following is a 287-amino-acid chain: rRNA adenine N-6-methyltransferase (287 aa).

The span at 1 to 13 (MKKKNHKYRGKKL) shows a compositional bias: basic residues. The interval 1–21 (MKKKNHKYRGKKLNRGESPNF) is disordered. The S-adenosyl-L-methionine site is built by His-25, Met-27, Gly-52, Glu-73, Asp-98, and Asn-114.

Belongs to the class I-like SAM-binding methyltransferase superfamily. rRNA adenine N(6)-methyltransferase family. As to quaternary structure, homodimer.

In terms of biological role, involved in erythromycin resistance. This is rRNA adenine N-6-methyltransferase (ermJ) from Bacillus anthracis.